A 621-amino-acid polypeptide reads, in one-letter code: Glutathione-regulated potassium-efflux system protein KefC (621 aa).

Transmembrane regions (helical) follow at residues 4-24, 26-46, 54-74, 90-110, 114-134, 149-169, 178-198, 218-238, 270-290, 294-314, 326-346, and 359-379; these read HTLI…PIAV, LGLG…PWGL, AILH…GLEL, GALQ…LLGL, VAEL…MQAM, FAVL…IPLL, LVAF…VVAL, VFSA…EEVG, GLLL…GTLV, LRIV…LWLI, RWFA…FGAA, and ALTL…VLLT. Positions 399–518 constitute an RCK N-terminal domain; sequence QPRVIVAGFG…AGVEAPERET (120 aa). The segment at 598–621 is disordered; that stretch reads GWQGTEEGRHTGDIADEPENKPSA.

The protein belongs to the monovalent cation:proton antiporter 2 (CPA2) transporter (TC 2.A.37) family. KefC subfamily. Homodimer. Interacts with the regulatory subunit KefF.

It localises to the cell inner membrane. Its function is as follows. Pore-forming subunit of a potassium efflux system that confers protection against electrophiles. Catalyzes K(+)/H(+) antiport. The chain is Glutathione-regulated potassium-efflux system protein KefC from Klebsiella pneumoniae (strain 342).